The sequence spans 165 residues: uncharacterized protein (165 aa).

A run of 6 helical transmembrane segments spans residues 6-26 (ILFP…SGQA), 28-48 (LFSG…AFVY), 54-74 (AVTP…HFFA), 78-98 (WVWW…SLLV), 110-130 (AVSM…MAWL), and 138-158 (ALLK…LLLI).

The protein localises to the cell membrane. This is an uncharacterized protein from Bacillus subtilis (strain 168).